The primary structure comprises 1100 residues: Sorbin and SH3 domain-containing protein 2 (1100 aa).

Tyr-13, Ser-14, His-27, Gly-28, Ser-30, and Ser-43 each carry phosphoserine. The span at 30-52 (SLDSTDTYPQHAQSLDGTTSSSI) shows a compositional bias: polar residues. Residues 30 to 57 (SLDSTDTYPQHAQSLDGTTSSSIPLYRS) form a disordered region. Residues 66-127 (VIKAPHYPGI…YNTPYTYNAG (62 aa)) form the SoHo domain. Over residues 134–147 (SAQSHPAAKTQTYR) the composition is skewed to polar residues. The segment at 134-311 (SAQSHPAAKT…SPSRAKGGDD (178 aa)) is disordered. Position 153 is an alanine amide (His-153). Phosphoserine occurs at positions 154 and 157. The segment covering 167–180 (PVPPPHVPPPVPPL) has biased composition (pro residues). Residues 181 to 217 (RPRDRSSTEKHDWDPPDRKVDTRKFRSEPRSIFEYEP) show a composition bias toward basic and acidic residues. Phosphothreonine occurs at positions 234 and 236. Phosphoserine occurs at positions 239, 245, 248, 258, 259, and 260. 3 positions are modified to phosphothreonine: Thr-277, Gly-280, and Val-282. Ser-287 bears the Phosphoserine mark. Low complexity predominate over residues 287–304 (SSTTLTKSFTSSSPSSPS). At Thr-292 the chain carries Phosphothreonine. 10 positions are modified to phosphoserine: Phe-295, Ser-297, Ser-298, Ser-299, Ser-301, Ser-302, Ser-304, Ala-306, Asp-311, and Pro-316. Phosphothreonine occurs at positions 320, 322, and 326. Residues His-341, Val-344, and Arg-346 each carry the phosphoserine modification. Phosphothreonine is present on Glu-366. 2 positions are modified to phosphoserine: Ser-381 and Ser-383. Phosphothreonine occurs at positions 413 and 415. Phosphoserine is present on residues Arg-437 and Arg-439. The residue at position 459 (Ile-459) is a Phosphothreonine. Lys-474, Ser-494, Ser-497, Ser-550, and Ser-750 each carry phosphoserine. The interval 807 to 866 (RMPRSASFQDVDTANSSCHHQDRGGALQDRESPRSYSSTLTDMGRSAPRERRGTPEKEKL) is disordered. Positions 812–824 (ASFQDVDTANSSC) are enriched in polar residues. Residues 825–839 (HHQDRGGALQDRESP) are compositionally biased toward basic and acidic residues. The residue at position 843 (Ser-843) is a Phosphoserine. Residues 853-866 (APRERRGTPEKEKL) show a composition bias toward basic and acidic residues. SH3 domains lie at 863 to 922 (KEKL…KLTP) and 938 to 999 (GEIG…VVKK). Phosphoserine occurs at positions 1017 and 1023. The 60-residue stretch at 1041 to 1100 (GGGEPFQALYNYTPRNEDELELRESDVIDVMEKCDDGWFVGTSRRTKFFGTFPGNYVKRL) folds into the SH3 3 domain.

In terms of assembly, interacts with ABL, CBL, DNM1, DNM2, FLOT1, AFDN, PTK2B/PYK2, SAPAP, SPTAN1, SYNJ1, SYNJ2, VCL/vinculin and WASF. Interacts with ABL1/c-Abl, ABL2/v-Abl/Arg, ACTN, CBL and PALLD. Interacts with PTPN12 and WASF1 via its SH3 domains; this interaction may mediate the partial PTPN12 and WASF1 translocation to focal adhesion sites. In terms of processing, ubiquitinated by CBL. Dephosphorylated by PTPN12. As to expression, abundantly expressed in heart. In cardiac muscle cells, located in the Z-disks of sarcomere. Also found, but to a lower extent, in small and large intestine, pancreas, thymus, colon, spleen, prostate, testis, brain, ovary and epithelial cells. In the pancreas, mainly expressed in acinar cells, duct cells and all cell types in islets (at protein level). Tends to be down-regulated in pancreatic adenocarcinomas ans metastases.

It is found in the cytoplasm. The protein localises to the perinuclear region. It localises to the apical cell membrane. Its subcellular location is the cell junction. The protein resides in the focal adhesion. It is found in the cell projection. The protein localises to the lamellipodium. Its function is as follows. Adapter protein that plays a role in the assembling of signaling complexes, being a link between ABL kinases and actin cytoskeleton. Can form complex with ABL1 and CBL, thus promoting ubiquitination and degradation of ABL1. May play a role in the regulation of pancreatic cell adhesion, possibly by acting on WASF1 phosphorylation, enhancing phosphorylation by ABL1, as well as dephosphorylation by PTPN12. Isoform 6 increases water and sodium absorption in the intestine and gall-bladder. This Homo sapiens (Human) protein is Sorbin and SH3 domain-containing protein 2 (SORBS2).